The sequence spans 180 residues: ATP-dependent protease subunit HslV (180 aa).

Residue T6 is part of the active site. 3 residues coordinate Na(+): G162, C165, and T168.

This sequence belongs to the peptidase T1B family. HslV subfamily. In terms of assembly, a double ring-shaped homohexamer of HslV is capped on each side by a ring-shaped HslU homohexamer. The assembly of the HslU/HslV complex is dependent on binding of ATP.

It is found in the cytoplasm. It carries out the reaction ATP-dependent cleavage of peptide bonds with broad specificity.. With respect to regulation, allosterically activated by HslU binding. In terms of biological role, protease subunit of a proteasome-like degradation complex believed to be a general protein degrading machinery. The protein is ATP-dependent protease subunit HslV of Oleidesulfovibrio alaskensis (strain ATCC BAA-1058 / DSM 17464 / G20) (Desulfovibrio alaskensis).